The chain runs to 1116 residues: uncharacterized protein (1116 aa).

4 consecutive EF-hand domains span residues 8–43, 42–77, 166–201, and 292–327; these read EEQT…SGLA, LAPQ…VALA, LSTE…INLL, and LPED…IKLK. EH domains follow at residues 9 to 106, 134 to 224, and 259 to 348; these read EQTA…DSSK, EMTR…AAST, and DLTS…VAPL. Asp-305, Asn-307, Asn-309, Lys-311, and Glu-316 together coordinate Ca(2+). Disordered regions lie at residues 360-454, 703-774, 812-890, 909-978, 1004-1024, 1044-1066, and 1095-1116; these read PSVV…NSPT, SVNL…ASTV, TSLS…NTSA, PFAT…SPQI, TTTH…ENQY, SNEV…DDEL, and QAAE…AGHH. Over residues 371-381 the composition is skewed to pro residues; sequence NPNPTLAPNPT. The segment covering 401 to 416 has biased composition (polar residues); it reads FSPTLAPQHTSSNATK. Residues 565 to 707 adopt a coiled-coil conformation; that stretch reads KAQTEQVNRE…EDGLKSVNLT (143 aa). Residues 723-749 are compositionally biased toward polar residues; sequence SFTSNGITTDKPTLPDTTSSVPTQHNS. Composition is skewed to low complexity over residues 755 to 774 and 812 to 827; these read NTLR…ASTV and TSLS…SLDS. Positions 864–890 are enriched in polar residues; the sequence is SKLTGSARNTAEPVENTSAEPIENTSA. Over residues 957–969 the composition is skewed to acidic residues; the sequence is EIDDDESSSDEEP. Composition is skewed to acidic residues over residues 1055 to 1066 and 1104 to 1116; these read TANESDNDDDEL and NSST…AGHH.

The protein localises to the cytoplasm. Its subcellular location is the cytoskeleton. This is an uncharacterized protein from Schizosaccharomyces pombe (strain 972 / ATCC 24843) (Fission yeast).